The chain runs to 196 residues: Interleukin-23 subunit alpha (196 aa).

The first 21 residues, 1–21 (MLDCRAVIMLWLLPWVTQGLA), serve as a signal peptide directing secretion.

The protein belongs to the IL-6 superfamily. In terms of assembly, heterodimer with IL12B; disulfide-linked. The heterodimer is known as interleukin IL-23. Interacts with IL23R; this interaction enables recruitment of IL12RB1. Secreted by activated dendritic cells (at protein level). Detected in various tissues with higher expression in polarized Th1 cells and activated macrophages.

It is found in the secreted. Functionally, associates with IL12B to form the IL-23 interleukin, a heterodimeric cytokine which functions in innate and adaptive immunity. IL-23 may constitute with IL-17 an acute response to infection in peripheral tissues. IL-23 binds to a heterodimeric receptor complex composed of IL12RB1 and IL23R, activates the Jak-Stat signaling cascade, stimulates memory rather than naive T-cells and promotes production of pro-inflammatory cytokines. IL-23 induces autoimmune inflammation and thus may be responsible for autoimmune inflammatory diseases and may be important for tumorigenesis. Its function is as follows. Associates with IL12B to form the pro-inflammatory cytokine IL-23 that plays different roles in innate and adaptive immunity. Released by antigen-presenting cells such as dendritic cells or macrophages, binds to a heterodimeric receptor complex composed of IL12RB1 and IL23R to activate JAK2 and TYK2 which then phosphorylate the receptor to form a docking site leading to the phosphorylation of STAT3 and STAT4. This process leads to activation of several pathways including p38 MAPK or NF-kappa-B and promotes the production of pro-inflammatory cytokines such as interleukin-17A/IL17A. In turn, participates in the early and effective intracellular bacterial clearance. Promotes the expansion and survival of T-helper 17 cells, a CD4-positive helper T-cell subset that produces IL-17, as well as other IL-17-producing cells. This is Interleukin-23 subunit alpha (Il23a) from Mus musculus (Mouse).